The following is a 168-amino-acid chain: Phosphopantetheine adenylyltransferase (168 aa).

Residue T9 participates in substrate binding. ATP is bound by residues T9 to F10 and H17. Residues K41, L74, and R88 each contribute to the substrate site. Residues G89–R91, E99, and L124–R130 each bind ATP.

Belongs to the bacterial CoaD family. As to quaternary structure, homohexamer. It depends on Mg(2+) as a cofactor.

The protein localises to the cytoplasm. It catalyses the reaction (R)-4'-phosphopantetheine + ATP + H(+) = 3'-dephospho-CoA + diphosphate. It participates in cofactor biosynthesis; coenzyme A biosynthesis; CoA from (R)-pantothenate: step 4/5. Its function is as follows. Reversibly transfers an adenylyl group from ATP to 4'-phosphopantetheine, yielding dephospho-CoA (dPCoA) and pyrophosphate. This Sphingopyxis alaskensis (strain DSM 13593 / LMG 18877 / RB2256) (Sphingomonas alaskensis) protein is Phosphopantetheine adenylyltransferase.